Reading from the N-terminus, the 539-residue chain is Chaperonin GroEL (539 aa).

Residues threonine 29–proline 32, aspartate 86–threonine 90, glycine 413, asparagine 477–alanine 479, and aspartate 493 each bind ATP.

Belongs to the chaperonin (HSP60) family. As to quaternary structure, forms a cylinder of 14 subunits composed of two heptameric rings stacked back-to-back. Interacts with the co-chaperonin GroES.

It is found in the cytoplasm. It catalyses the reaction ATP + H2O + a folded polypeptide = ADP + phosphate + an unfolded polypeptide.. Functionally, together with its co-chaperonin GroES, plays an essential role in assisting protein folding. The GroEL-GroES system forms a nano-cage that allows encapsulation of the non-native substrate proteins and provides a physical environment optimized to promote and accelerate protein folding. The polypeptide is Chaperonin GroEL (Leifsonia xyli subsp. xyli (strain CTCB07)).